We begin with the raw amino-acid sequence, 398 residues long: Histidinol-phosphate aminotransferase (398 aa).

Polar residues predominate over residues 1–10 (MTGQRATPQP). The tract at residues 1 to 30 (MTGQRATPQPTLDDLPLRDDLRGKSPYGAP) is disordered. An N6-(pyridoxal phosphate)lysine modification is found at lysine 234.

It belongs to the class-II pyridoxal-phosphate-dependent aminotransferase family. Histidinol-phosphate aminotransferase subfamily. Homodimer. The cofactor is pyridoxal 5'-phosphate.

It catalyses the reaction L-histidinol phosphate + 2-oxoglutarate = 3-(imidazol-4-yl)-2-oxopropyl phosphate + L-glutamate. It participates in amino-acid biosynthesis; L-histidine biosynthesis; L-histidine from 5-phospho-alpha-D-ribose 1-diphosphate: step 7/9. This chain is Histidinol-phosphate aminotransferase, found in Mycobacterium avium (strain 104).